We begin with the raw amino-acid sequence, 154 residues long: Bacterial ferritin (154 aa).

A Ferritin-like diiron domain is found at methionine 1 to glycine 145. 6 residues coordinate Fe cation: glutamate 18, glutamate 51, histidine 54, glutamate 93, glutamate 127, and histidine 130.

Belongs to the bacterioferritin family. Forms a bacterioferritin (BFR) complex with BfrB. Heterooligomer of 24 subunits, arranged as 12 dimers, that are packed together to form an approximately spherical molecule with a central cavity, in which large amounts of iron can be deposited.

It localises to the cytoplasm. The enzyme catalyses 4 Fe(2+) + O2 + 4 H(+) = 4 Fe(3+) + 2 H2O. It carries out the reaction Fe(2+)(in) = Fe(2+)(out). Functionally, iron-storage protein. Its ferroxidase center binds Fe(2+), oxidizes it using dioxygen to Fe(3+), and participates in the subsequent Fe(3+) oxide mineral core formation within the central cavity of the BFR protein shell. Plays a role in protection against iron-mediated oxidative stress. The polypeptide is Bacterial ferritin (Neisseria gonorrhoeae).